The chain runs to 463 residues: Argininosuccinate lyase (463 aa).

It belongs to the lyase 1 family. Argininosuccinate lyase subfamily.

It localises to the cytoplasm. It catalyses the reaction 2-(N(omega)-L-arginino)succinate = fumarate + L-arginine. The protein operates within amino-acid biosynthesis; L-arginine biosynthesis; L-arginine from L-ornithine and carbamoyl phosphate: step 3/3. The sequence is that of Argininosuccinate lyase from Methylorubrum extorquens (strain CM4 / NCIMB 13688) (Methylobacterium extorquens).